Consider the following 257-residue polypeptide: Snake venom serine protease KN9 (257 aa).

The signal sequence occupies residues 1-18 (MVLIRVLANLLILQLSYA). The propeptide occupies 19 to 24 (QKSSEL). The Peptidase S1 domain occupies 25 to 248 (VVGGDECNIN…HLDWIKSIIA (224 aa)). 5 cysteine pairs are disulfide-bonded: Cys31–Cys162, Cys49–Cys65, Cys141–Cys209, Cys173–Cys188, and Cys199–Cys224. Catalysis depends on His64, which acts as the Charge relay system. N-linked (GlcNAc...) asparagine glycosylation is present at Asn102. The Charge relay system role is filled by Asp109. 2 N-linked (GlcNAc...) asparagine glycosylation sites follow: Asn120 and Asn121. Ser203 serves as the catalytic Charge relay system.

The protein belongs to the peptidase S1 family. Snake venom subfamily. As to quaternary structure, monomer. In terms of tissue distribution, expressed by the venom gland.

It is found in the secreted. In terms of biological role, snake venom serine protease that may act in the hemostasis system of the prey. The protein is Snake venom serine protease KN9 of Trimeresurus stejnegeri (Chinese green tree viper).